A 699-amino-acid chain; its full sequence is Triacylglycerol hydrolase DDHD2 (699 aa).

Polar residues predominate over residues 1–11; the sequence is MSSGESHQEQL. The disordered stretch occupies residues 1-25; the sequence is MSSGESHQEQLSQSDPSPSPNSCSS. A compositionally biased stretch (low complexity) spans 12 to 25; sequence SQSDPSPSPNSCSS. Residues 30–112 enclose the WWE domain; the sequence is DMDASSSYEP…WDELPSEVRR (83 aa). S351 functions as the Nucleophile in the catalytic mechanism. The SAM domain maps to 383–445; the sequence is DRGDASTLEE…KILNHFSARK (63 aa). At S447 the chain carries Phosphoserine. One can recognise a DDHD domain in the interval 484–688; sequence LNYKPEIFFA…VLLVLKEIYQ (205 aa). Residues 599 to 635 are disordered; that stretch reads QASETAEETEAEPESSSEKSNEANTEEPPVEVKEEAP. Acidic residues predominate over residues 603-613; sequence TAEETEAEPES.

This sequence belongs to the PA-PLA1 family. In terms of assembly, forms homooligomers and, to a much smaller extent, heterooligomers with DDHD1.

It localises to the cytoplasm. Its subcellular location is the cytosol. The protein resides in the endoplasmic reticulum-Golgi intermediate compartment. It is found in the golgi apparatus. The protein localises to the cis-Golgi network. The enzyme catalyses a triacylglycerol + H2O = a diacylglycerol + a fatty acid + H(+). It catalyses the reaction a diacylglycerol + H2O = a monoacylglycerol + a fatty acid + H(+). The catalysed reaction is a 1,3-diacylglycerol + H2O = a 1-acylglycerol + a fatty acid + H(+). It carries out the reaction a 1-acylglycerol + H2O = glycerol + a fatty acid + H(+). The enzyme catalyses 1,2,3-tri-(9Z-octadecenoyl)-glycerol + H2O = di-(9Z)-octadecenoylglycerol + (9Z)-octadecenoate + H(+). It catalyses the reaction di-(9Z)-octadecenoylglycerol + H2O = (9Z-octadecenoyl)-glycerol + (9Z)-octadecenoate + H(+). The catalysed reaction is 1,3-di-(9Z-octadecenoyl)-glycerol + H2O = 1-(9Z-octadecenoyl)-glycerol + (9Z)-octadecenoate + H(+). It carries out the reaction trihexadecanoylglycerol + H2O = dihexadecanoylglycerol + hexadecanoate + H(+). The enzyme catalyses 1,2-di-(9Z-octadecenoyl)-sn-glycero-3-phosphocholine + H2O = (9Z-octadecenoyl)-sn-glycero-3-phosphocholine + (9Z)-octadecenoate + H(+). It catalyses the reaction 1-(9Z-octadecenoyl)-glycerol + H2O = glycerol + (9Z)-octadecenoate + H(+). The catalysed reaction is 1,2-di-(9Z-octadecenoyl)-sn-glycero-3-phosphate + H2O = 2-(9Z-octadecenoyl)-sn-glycero-3-phosphate + (9Z)-octadecenoate + H(+). It carries out the reaction 1-hexadecanoyl-2-(9Z-octadecenoyl)-sn-glycero-3-phosphate + H2O = 2-(9Z-octadecenoyl)-sn-glycero-3-phosphate + hexadecanoate + H(+). The enzyme catalyses 1-hexadecanoyl-2-(9Z-octadecenoyl)-sn-glycero-3-phosphoethanolamine + H2O = 2-(9Z-octadecenoyl)-sn-glycero-3-phosphoethanolamine + hexadecanoate + H(+). It catalyses the reaction 1-hexadecanoyl-2-(9Z-octadecenoyl)-sn-glycero-3-phospho-L-serine + H2O = 2-(9Z-octadecenoyl)-sn-glycero-3-phospho-L-serine + hexadecanoate + H(+). The catalysed reaction is 1-hexadecanoyl-2-(9Z-octadecenoyl)-sn-glycero-3-phosphocholine + H2O = 2-(9Z-octadecenoyl)-sn-glycero-3-phosphocholine + hexadecanoate + H(+). Diacylglycerol (DAG) and triacylglycerol (TAG) lipase that is required for proper lipid homeostasis in the central nervous system. It cooperates with PNPLA2/ATGL in neuronal TAG catabolism and hydrolyzes sn-1,3-DAG downstream of PNPLA2/ATGL. In vitro, also acts as a phospholipase that hydrolyzes preferentially phosphatidic acids, including 1,2-dioleoyl-sn-phosphatidic acid, phosphatidylcholine and phosphatidylethanolamine. Specifically binds to phosphatidylinositol 3-phosphate (PI(3)P), phosphatidylinositol 4-phosphate (PI(4)P), phosphatidylinositol 5-phosphate (PI(5)P) and possibly phosphatidylinositol 4,5-bisphosphate (PI(4,5)P2). May be involved in the maintenance of the endoplasmic reticulum and/or Golgi structures. May regulate the transport between Golgi apparatus and plasma membrane. The chain is Triacylglycerol hydrolase DDHD2 from Mus musculus (Mouse).